A 237-amino-acid polypeptide reads, in one-letter code: C-type lectin domain family 4 member A (237 aa).

Residues 1 to 48 are Cytoplasmic-facing; it reads MTSEITYAEVRFKNEFKSSGINTASSAASKERTAPHKSNTGFPKLLCA. The ITIM motif signature appears at 5–10; it reads ITYAEV. A helical; Signal-anchor for type II membrane protein membrane pass occupies residues 49 to 69; it reads SLLIFFLLLAISFFIAFVIFF. Residues 70–237 are Extracellular-facing; sequence QKYSQLLEKK…SVCEMMKIHL (168 aa). 3 disulfides stabilise this stretch: Cys-106–Cys-117, Cys-134–Cys-230, and Cys-203–Cys-222. The C-type lectin domain maps to 113–231; it reads FSSNCYFIST…CLGPQRSVCE (119 aa). Ca(2+)-binding residues include Val-143, Asn-145, and Glu-149. The N-linked (GlcNAc...) asparagine glycan is linked to Asn-185. Ca(2+) is bound by residues Glu-195, Ser-197, and Glu-201. Residues 195-197 and Glu-201 each bind alpha-D-mannopyranose; that span reads EPS. Position 207–209 (207–209) interacts with N-acetyl-D-glucosamine; sequence NFR. Positions 218, 219, and 231 each coordinate Ca(2+).

As to quaternary structure, may interact with PTPN6 via its ITIM motif. Expressed preferentially in hematopoietic tissues. Expressed in all circulating Ag-presenting cells such as dendritic cells, myeloid cells, monocytes, macrophages, B-cells and epidermal Langerhans cells (at protein level). Expressed in peripheral blood leukocytes, neutrophils, moderate quantities in spleen, lymph node, and bone marrow, and at very low levels in thymus.

It is found in the cell membrane. Functionally, C-type lectin receptor that binds carbohydrates mannose and fucose but also weakly interacts with N-acetylglucosamine (GlcNAc) in a Ca(2+)-dependent manner. Involved in regulating immune reactivity. Once triggered by antigen, it is internalized by clathrin-dependent endocytosis and delivers its antigenic cargo into the antigen presentation pathway resulting in cross-priming of CD8(+) T cells. This cross-presentation and cross-priming are enhanced by TLR7 and TLR8 agonists with increased expansion of the CD8(+) T cells, high production of IFNG and TNF with reduced levels of IL4, IL5 and IL13. In plasmacytoid dendritic cells, inhibits TLR9-mediated IFNA and TNF production. May be involved via its ITIM motif (immunoreceptor tyrosine-based inhibitory motifs) in the inhibition of B-cell-receptor-mediated calcium mobilization and protein tyrosine phosphorylation. In terms of biological role, (Microbial infection) Involved in the interaction between HIV-1 virus and dendritic cells. Enhances HIV-1 binding/entry and virus infection. Requires ITIM motif-associated signal transduction pathway involving phosphatases PTPN6 and PTPN11, SYK, Src kinases and MAP kinases. In Homo sapiens (Human), this protein is C-type lectin domain family 4 member A.